The following is a 255-amino-acid chain: 4-hydroxy-tetrahydrodipicolinate reductase (255 aa).

Residues Gly-9–Met-14, Gly-89–Thr-91, and Ala-115–Phe-118 each bind NAD(+). His-145 (proton donor/acceptor) is an active-site residue. His-146 is a (S)-2,3,4,5-tetrahydrodipicolinate binding site. The active-site Proton donor is Lys-149. A (S)-2,3,4,5-tetrahydrodipicolinate-binding site is contributed by Gly-155 to Thr-156.

The protein belongs to the DapB family.

It is found in the cytoplasm. The catalysed reaction is (S)-2,3,4,5-tetrahydrodipicolinate + NAD(+) + H2O = (2S,4S)-4-hydroxy-2,3,4,5-tetrahydrodipicolinate + NADH + H(+). The enzyme catalyses (S)-2,3,4,5-tetrahydrodipicolinate + NADP(+) + H2O = (2S,4S)-4-hydroxy-2,3,4,5-tetrahydrodipicolinate + NADPH + H(+). Its pathway is amino-acid biosynthesis; L-lysine biosynthesis via DAP pathway; (S)-tetrahydrodipicolinate from L-aspartate: step 4/4. Functionally, catalyzes the conversion of 4-hydroxy-tetrahydrodipicolinate (HTPA) to tetrahydrodipicolinate. The protein is 4-hydroxy-tetrahydrodipicolinate reductase of Streptococcus gordonii (strain Challis / ATCC 35105 / BCRC 15272 / CH1 / DL1 / V288).